The primary structure comprises 453 residues: MFAIAILAAGKGTRMRSSYPKVLQQLAGRSLIKRVIKSCEDLKPDRFLVIVGHQAEAVQDHLKELSHLEYINQVPQKGTGHAIQQLLPVLDNFIGDLLVLNGDVPLLKAETLQKLIAKHKTSKASVTFLSARLSNPKGYGRVFSNNQDEVDRIVEDADCSREEKSNKLTNAGIYLFKWDLLKNILPKLSSTNKQSELYLTDAISQLPTAIHLEVDNIDEVSGVNDRAQLANCENLIQQSLRNHWMSKGVSFIDPESCTISEESQFGIDIVIEPQTHLRGNCFIGNNCRLGPSTYIEDSRLGENVNVMQSTLNNCQVASHVKIGPFAHLRPETNVSSNCRIGNFVEIKKSELGQGTKVNHLSYIGDSHVGCHVNIGAGTITANFDGFRKNETVIGDHTKTGANSVLIAPINIGNRVTVGAGSTLTKNVPDGSLAIERSKQNIKENWKTREETNQ.

Residues 1–226 (MFAIAILAAG…IDEVSGVNDR (226 aa)) form a pyrophosphorylase region. UDP-N-acetyl-alpha-D-glucosamine is bound by residues 7–10 (LAAG), Lys-21, Gln-73, and 78–79 (GT). Residue Asp-103 participates in Mg(2+) binding. Positions 140, 155, 170, and 224 each coordinate UDP-N-acetyl-alpha-D-glucosamine. Asn-224 is a binding site for Mg(2+). The tract at residues 227-247 (AQLANCENLIQQSLRNHWMSK) is linker. Residues 248-453 (GVSFIDPESC…NWKTREETNQ (206 aa)) are N-acetyltransferase. Arg-329 and Lys-347 together coordinate UDP-N-acetyl-alpha-D-glucosamine. Catalysis depends on His-359, which acts as the Proton acceptor. The UDP-N-acetyl-alpha-D-glucosamine site is built by Tyr-362 and Asn-373. 3 residues coordinate acetyl-CoA: Ala-376, Ala-419, and Arg-436.

This sequence in the N-terminal section; belongs to the N-acetylglucosamine-1-phosphate uridyltransferase family. In the C-terminal section; belongs to the transferase hexapeptide repeat family. In terms of assembly, homotrimer. It depends on Mg(2+) as a cofactor.

It is found in the cytoplasm. It carries out the reaction alpha-D-glucosamine 1-phosphate + acetyl-CoA = N-acetyl-alpha-D-glucosamine 1-phosphate + CoA + H(+). The catalysed reaction is N-acetyl-alpha-D-glucosamine 1-phosphate + UTP + H(+) = UDP-N-acetyl-alpha-D-glucosamine + diphosphate. The protein operates within nucleotide-sugar biosynthesis; UDP-N-acetyl-alpha-D-glucosamine biosynthesis; N-acetyl-alpha-D-glucosamine 1-phosphate from alpha-D-glucosamine 6-phosphate (route II): step 2/2. It participates in nucleotide-sugar biosynthesis; UDP-N-acetyl-alpha-D-glucosamine biosynthesis; UDP-N-acetyl-alpha-D-glucosamine from N-acetyl-alpha-D-glucosamine 1-phosphate: step 1/1. Its pathway is bacterial outer membrane biogenesis; LPS lipid A biosynthesis. In terms of biological role, catalyzes the last two sequential reactions in the de novo biosynthetic pathway for UDP-N-acetylglucosamine (UDP-GlcNAc). The C-terminal domain catalyzes the transfer of acetyl group from acetyl coenzyme A to glucosamine-1-phosphate (GlcN-1-P) to produce N-acetylglucosamine-1-phosphate (GlcNAc-1-P), which is converted into UDP-GlcNAc by the transfer of uridine 5-monophosphate (from uridine 5-triphosphate), a reaction catalyzed by the N-terminal domain. This chain is Bifunctional protein GlmU, found in Prochlorococcus marinus (strain MIT 9211).